The primary structure comprises 1627 residues: Formin-like protein 5 (1627 aa).

In terms of domain architecture, Phosphatase tensin-type spans 5 to 194 (RKFFLKKTPD…HYITRQGSGP (190 aa)). The Phosphocysteine intermediate role is filled by cysteine 127. One can recognise a C2 tensin-type domain in the interval 200 to 337 (SRPLILDSIV…FRAEVVFSDP (138 aa)). 5 disordered regions span residues 370–413 (EAEE…LEKH), 680–787 (TKRE…YDSS), 801–1181 (KFNV…RGVV), 1241–1261 (AAVPKPNDSSKSDSRRKSLGS), and 1571–1627 (KQAE…KDVG). 4 stretches are compositionally biased toward basic and acidic residues: residues 402 to 413 (VSREDSGSLEKH), 681 to 691 (KREESGGRRDV), 700 to 717 (IEARAKSPRISSDRRQIP), and 726 to 742 (MPVDHAPEAVLLEEKLG). Pro residues-rich tracts occupy residues 824–835 (APPPPPPPPPPY), 852–870 (QPPPPPPPPPLPPPPPPPA), 877–886 (IPPPPPPPPL), 897–908 (VPPPPPPPPPPR), 931–965 (ISPPPPPPPPPLKPSSGAPCPPPPPPPPPPPPPSA), and 974–1168 (APPP…PPGG). The FH2 domain occupies 1188 to 1588 (FGAAAARKST…RAEKEAEAEK (401 aa)). Basic and acidic residues-rich tracts occupy residues 1248-1261 (DSSKSDSRRKSLGS) and 1571-1590 (KQAELDKKRAEKEAEAEKSK). A compositionally biased stretch (polar residues) spans 1600–1611 (KPSNPSRQVKQT). Over residues 1612–1627 (PDTKTRAASRRGKDVG) the composition is skewed to basic and acidic residues.

The protein belongs to the formin-like family. Class-II subfamily.

This chain is Formin-like protein 5 (FH5), found in Oryza sativa subsp. japonica (Rice).